A 1209-amino-acid chain; its full sequence is MANGGGGGGGGSSGSSGGGGGGGGGETALRMSSNIHANHLSLDASSSSSSSSSSSSSSSSSVHEPKMDALIIPVTMEVPCDSRGQRMWWAFLASSMVTFFGGLFIILLWRTLKYLWTVCCHCGGKTKEAQKINNGSSQADGTLKPVDEKEEVVAAEVGWMTSVKDWAGVMISAQTLTGRVLVVLVFALSIGALVIYFIDSSNPIESCQNFYKDFTLQIDMAFNVFFLLYFGLRFIAANDKLWFWLEVNSVVDFFTVPPVFVSVYLNRSWLGLRFLRALRLIQFSEILQFLNILKTSNSIKLVNLLSIFISTWLTAAGFIHLVENSGDPWENFQNNQALTYWECVYLLMVTMSTVGYGDVYAKTTLGRLFMVFFILGGLAMFASYVPEIIELIGNRKKYGGSYSAVSGRKHIVVCGHITLESVSNFLKDFLHKDRDDVNVEIVFLHNISPNLELEALFKRHFTQVEFYQGSVLNPHDLARVKIESADACLILANKYCADPDAEDASNIMRVISIKNYHPKIRIITQMLQYHNKAHLLNIPSWNWKEGDDAICLAELKLGFIAQSCLAQGLSTMLANLFSMRSFIKIEEDTWQKYYLEGVSNEMYTEYLSSAFVGLSFPTVCELCFVKLKLLMIAIEYKSANRESRSRKRILINPGNHLKIQEGTLGFFIASDAKEVKRAFFYCKACHDDVTDPKRIKKCGCRRLEDEQPPTLSPKKKQRNGGMRNSPNTSPKLMRHDPLLIPGNDQIDNMDSNVKKYDSTGMFHWCAPKEIEKVILTRSEAAMTVLSGHVVVCIFGDVSSALIGLRNLVMPLRASNFHYHELKHIVFVGSIEYLKREWETLHNFPKVSILPGTPLSRADLRAVNINLCDMCVILSANQNNIDDTSLQDKECILASLNIKSMQFDDSIGVLQANSQGFTPPGMDRSSPDNSPVHGMLRQPSITTGVNIPIITELAKPGKLPLVSVNQEKNSGTHILMITELVNDTNVQFLDQDDDDDPDTELYLTQPFACGTAFAVSVLDSLMSATYFNDNILTLIRTLVTGGATPELEALIAEENALRGGYSTPQTLANRDRCRVAQLALLDGPFADLGDGGCYGDLFCKALKTYNMLCFGIYRLRDAHLSTPSQCTKRYVITNPPYEFELVPTDLIFCLMQFDHNAGQSRASLSHSSHSSQSSSKKSSSVHSIPSTANRPNRPKSRESRDKQKKEMVYR.

Residues methionine 1 to glutamate 26 are compositionally biased toward gly residues. Disordered stretches follow at residues methionine 1 to leucine 29 and leucine 42 to glutamate 64. The Extracellular portion of the chain corresponds to methionine 1–methionine 87. Residues serine 45–serine 61 show a composition bias toward low complexity. The chain crosses the membrane as a helical span at residues tryptophan 88 to leucine 108. At tryptophan 109 to arginine 179 the chain is on the cytoplasmic side. 3 S-palmitoyl cysteine lipidation sites follow: cysteine 119, cysteine 120, and cysteine 122. The chain crosses the membrane as a helical span at residues valine 180–serine 200. Residues serine 201–threonine 215 lie on the Extracellular side of the membrane. Residues leucine 216–alanine 236 traverse the membrane as a helical segment. Over alanine 237–lysine 240 the chain is Cytoplasmic. A helical transmembrane segment spans residues leucine 241–valine 261. Residues serine 262–leucine 265 lie on the Extracellular side of the membrane. The helical; Voltage-sensor transmembrane segment at asparagine 266–isoleucine 286 threads the bilayer. The Cytoplasmic segment spans residues leucine 287–leucine 301. The helical transmembrane segment at valine 302–valine 322 threads the bilayer. Residues glutamate 323–glutamine 336 are Extracellular-facing. An intramembrane region (pore-forming) is located at residues alanine 337 to valine 359. The Selectivity for potassium motif lies at threonine 353–tyrosine 356. The Extracellular segment spans residues tyrosine 360–leucine 368. A helical transmembrane segment spans residues phenylalanine 369 to isoleucine 389. Residues glutamate 390–arginine 1209 lie on the Cytoplasmic side of the membrane. The RCK N-terminal 1 domain maps to arginine 408–isoleucine 550. The Mg(2+) site is built by glutamate 440, glutamine 463, and glutamate 465. The interval leucine 557–phenylalanine 577 is segment S7. The segment S8 stretch occupies residues leucine 614–isoleucine 634. A heme-binding motif region spans residues cysteine 682–histidine 686. The interval glutamate 704 to arginine 734 is disordered. A Phosphothreonine modification is found at threonine 710. Phosphoserine is present on residues serine 712, serine 725, and serine 729. Positions valine 784 to leucine 804 are segment S9. Residues serine 786 to proline 930 form the RCK N-terminal 2 domain. Threonine 917 is modified (phosphothreonine). Phosphoserine is present on residues serine 925 and serine 929. The short motif at threonine 977–glutamate 999 is the Calcium bowl element. Residues glutamine 986, aspartate 989, aspartate 992, and aspartate 994 each contribute to the Ca(2+) site. The segment at phenylalanine 1006–phenylalanine 1026 is segment S10. Residues arginine 1160–serine 1185 are compositionally biased toward low complexity. The disordered stretch occupies residues arginine 1160–arginine 1209. Residues lysine 1194 to arginine 1209 show a composition bias toward basic and acidic residues. Phosphoserine occurs at positions 1195 and 1198.

It belongs to the potassium channel family. Calcium-activated (TC 1.A.1.3) subfamily. KCa1.1/KCNMA1 sub-subfamily. Homotetramer; which constitutes the calcium-activated potassium channel. Interacts with beta subunits KCNMB1, KCNMB2, KCNMB3 and KCNMB4. Interacts with gamma subunits LRRC26, LRRC38, LRRC52 and LRRC55. Beta and gamma subunits are accessory, and modulate its activity. Interacts with RAB11B. Phosphorylated. Phosphorylation by kinases such as PKA and/or PKG. In smooth muscles, phosphorylation affects its activity. Post-translationally, palmitoylation by ZDHHC22 and ZDHHC23 within the intracellular linker between the S0 and S1 transmembrane domains regulates localization to the plasma membrane. Depalmitoylated by LYPLA1 and LYPLAL1, leading to retard exit from the trans-Golgi network.

The protein localises to the cell membrane. It is found in the endoplasmic reticulum membrane. The enzyme catalyses K(+)(in) = K(+)(out). Its activity is regulated as follows. Ethanol and carbon monoxide-bound heme increase channel activation. Heme inhibits channel activation. In terms of biological role, potassium channel activated by both membrane depolarization or increase in cytosolic Ca(2+) that mediates export of K(+). It is also activated by the concentration of cytosolic Mg(2+). Its activation dampens the excitatory events that elevate the cytosolic Ca(2+) concentration and/or depolarize the cell membrane. It therefore contributes to repolarization of the membrane potential. Plays a key role in controlling excitability in a number of systems, such as regulation of the contraction of smooth muscle, the tuning of hair cells in the cochlea, regulation of transmitter release, and innate immunity. In smooth muscles, its activation by high level of Ca(2+), caused by ryanodine receptors in the sarcoplasmic reticulum, regulates the membrane potential. In cochlea cells, its number and kinetic properties partly determine the characteristic frequency of each hair cell and thereby helps to establish a tonotopic map. Kinetics of KCNMA1 channels are determined by alternative splicing, phosphorylation status and its combination with modulating beta subunits. Highly sensitive to both iberiotoxin (IbTx) and charybdotoxin (CTX). Its function is as follows. Potassium channel activated by both membrane depolarization or increase in cytosolic Ca(2+) that mediates export of K(+). In Rattus norvegicus (Rat), this protein is Calcium-activated potassium channel subunit alpha-1 (Kcnma1).